The chain runs to 919 residues: Exostosin-like 3 (919 aa).

Residues Met-1–Thr-30 lie on the Cytoplasmic side of the membrane. The required for interaction with REG3A stretch occupies residues Met-1 to His-140. Residues Trp-31–Leu-51 form a helical; Signal-anchor for type II membrane protein membrane-spanning segment. Topologically, residues Thr-52–Ile-919 are lumenal. 2 disulfides stabilise this stretch: Cys-177/Cys-182 and Cys-188/Cys-236. N-linked (GlcNAc...) asparagine glycosylation is present at Asn-290. Ser-362 is modified (phosphoserine). A disulfide bond links Cys-400 and Cys-415. Asn-592 is a glycosylation site (N-linked (GlcNAc...) asparagine). Leu-668, Arg-672, Asn-697, Asn-723, Arg-728, Asp-744, Asp-745, and Asp-746 together coordinate UDP-N-acetyl-alpha-D-glucosamine. Asp-746 serves as a coordination point for Mn(2+). N-linked (GlcNAc...) asparagine glycosylation is present at Asn-790. Cysteines 831 and 879 form a disulfide. Residues Glu-832, Asp-833, and Arg-876 each coordinate UDP-N-acetyl-alpha-D-glucosamine. Residue Asp-833 is part of the active site.

Belongs to the glycosyltransferase 47 family. Homodimer; disulfide-linked. Interacts with REG3A. The cofactor is Mn(2+). Ubiquitous. Expressed in keratinocytes. Expressed in pancreas.

The protein localises to the endoplasmic reticulum membrane. The protein resides in the golgi apparatus. It localises to the cell membrane. Its subcellular location is the nucleus. It carries out the reaction 3-O-(beta-D-GlcA-(1-&gt;3)-beta-D-Gal-(1-&gt;3)-beta-D-Gal-(1-&gt;4)-beta-D-Xyl)-L-seryl-[protein] + UDP-N-acetyl-alpha-D-glucosamine = 3-O-(alpha-D-GlcNAc-(1-&gt;4)-beta-D-GlcA-(1-&gt;3)-beta-D-Gal-(1-&gt;3)-beta-D-Gal-(1-&gt;4)-beta-D-Xyl)-L-seryl-[protein] + UDP + H(+). The protein operates within glycan metabolism; heparan sulfate biosynthesis. Functionally, glycosyltransferase which regulates the biosynthesis of heparan sulfate (HS). Initiates HS synthesis by transferring the first N-acetyl-alpha-D-glucosamine (alpha-GlcNAc) residue (GlcNAcT-I activity) to the tetrasaccharide linker (GlcA-Gal-Gal-Xyl-)Ser core linker. May also transfer alpha-GlcNAc residues during HS elongation (GlcNAcT-II activity). Lacks glucuronyl transferase II (GlcAT-II) activity. Important for both skeletal development and hematopoiesis, through the formation of HS proteoglycans (HSPGs). Through the synthesis of HS, regulates postnatal pancreatic islet maturation and insulin secretion. Its function is as follows. Receptor for REG3A, REG3B and REG3G, induces the activation of downstream signaling pathways such as PI3K-AKT or RAS-RAF-MEK-ERK signaling pathway. Required for the function of REG3A in regulating keratinocyte proliferation and differentiation. Required for the inhibition of skin inflammation mediated by REG3A through the activation of PI3K-AKT-STAT3 pathway. Required for the function of REG3A and REG3G in glucose tolerance in pancreas. Expressed in microglia, is activated by nociceptor-derived REG3G in response to endotoxins, leading to the inhibition of kynurenine pathway to prevent endotoxic death. The protein is Exostosin-like 3 of Homo sapiens (Human).